We begin with the raw amino-acid sequence, 571 residues long: Phosphoribosylaminoimidazole carboxylase (571 aa).

The residue at position 37 (S37) is a Phosphoserine. The region spanning 110 to 298 (KEHLIKNGIA…QFEAHLRSIL (189 aa)) is the ATP-grasp domain. 138-193 (GRDLGFPFVLKSRTLAYDGRGNFVVKNKEMIPEALEVLKDRPLYAEKWAPFTKELA) provides a ligand contact to ATP.

This sequence in the C-terminal section; belongs to the AIR carboxylase family. Class I subfamily.

It catalyses the reaction 5-amino-1-(5-phospho-D-ribosyl)imidazole-4-carboxylate + H(+) = 5-amino-1-(5-phospho-beta-D-ribosyl)imidazole + CO2. The protein operates within purine metabolism; IMP biosynthesis via de novo pathway; 5-amino-1-(5-phospho-D-ribosyl)imidazole-4-carboxylate from 5-amino-1-(5-phospho-D-ribosyl)imidazole (carboxylase route): step 1/1. The chain is Phosphoribosylaminoimidazole carboxylase (ADE2) from Saccharomyces cerevisiae (strain ATCC 204508 / S288c) (Baker's yeast).